The primary structure comprises 134 residues: Small ribosomal subunit protein uS11 (134 aa).

Residues Ser-113–Pro-122 show a composition bias toward polar residues. The interval Ser-113–Val-134 is disordered.

It belongs to the universal ribosomal protein uS11 family. In terms of assembly, part of the 30S ribosomal subunit. Interacts with proteins S7 and S18. Binds to IF-3.

Its function is as follows. Located on the platform of the 30S subunit, it bridges several disparate RNA helices of the 16S rRNA. Forms part of the Shine-Dalgarno cleft in the 70S ribosome. This is Small ribosomal subunit protein uS11 from Corynebacterium aurimucosum (strain ATCC 700975 / DSM 44827 / CIP 107346 / CN-1) (Corynebacterium nigricans).